Consider the following 283-residue polypeptide: MSERLPVLLQYLVPQRALTVFAGFVASGRWGGITTAIIRRFVRKYRVDMSEAAEPDIARYTRFNDFFTRALRPGARPLASAELVCPVDGAISQFGAIERDQIFQAKGHHYSTRALVGGDAELAARFQDGQFATLYLSPRDYHRIHMPCDGRLLRMIHVPGDLFSVNPVTARGVPGLFARNERVVCEFDGPLGPFVLVLVGATIVGSMATVWHGQVNPPRSGRLREWRYADRELRLRQGEEMGRFLLGSTVVALFPQGSVRFDPGWEPGRAVRLGEAMAFAPLL.

Residues Asp-88, His-145, and Ser-248 each act as charge relay system; for autoendoproteolytic cleavage activity in the active site. Ser-248 acts as the Schiff-base intermediate with substrate; via pyruvic acid; for decarboxylase activity in catalysis. Ser-248 carries the pyruvic acid (Ser); by autocatalysis modification.

The protein belongs to the phosphatidylserine decarboxylase family. PSD-B subfamily. Prokaryotic type I sub-subfamily. In terms of assembly, heterodimer of a large membrane-associated beta subunit and a small pyruvoyl-containing alpha subunit. Requires pyruvate as cofactor. Post-translationally, is synthesized initially as an inactive proenzyme. Formation of the active enzyme involves a self-maturation process in which the active site pyruvoyl group is generated from an internal serine residue via an autocatalytic post-translational modification. Two non-identical subunits are generated from the proenzyme in this reaction, and the pyruvate is formed at the N-terminus of the alpha chain, which is derived from the carboxyl end of the proenzyme. The autoendoproteolytic cleavage occurs by a canonical serine protease mechanism, in which the side chain hydroxyl group of the serine supplies its oxygen atom to form the C-terminus of the beta chain, while the remainder of the serine residue undergoes an oxidative deamination to produce ammonia and the pyruvoyl prosthetic group on the alpha chain. During this reaction, the Ser that is part of the protease active site of the proenzyme becomes the pyruvoyl prosthetic group, which constitutes an essential element of the active site of the mature decarboxylase.

Its subcellular location is the cell membrane. It catalyses the reaction a 1,2-diacyl-sn-glycero-3-phospho-L-serine + H(+) = a 1,2-diacyl-sn-glycero-3-phosphoethanolamine + CO2. The protein operates within phospholipid metabolism; phosphatidylethanolamine biosynthesis; phosphatidylethanolamine from CDP-diacylglycerol: step 2/2. Its function is as follows. Catalyzes the formation of phosphatidylethanolamine (PtdEtn) from phosphatidylserine (PtdSer). This chain is Phosphatidylserine decarboxylase proenzyme, found in Methylibium petroleiphilum (strain ATCC BAA-1232 / LMG 22953 / PM1).